Reading from the N-terminus, the 257-residue chain is Phosphomannomutase (257 aa).

Asp-19 functions as the Nucleophile in the catalytic mechanism. Asp-19 and Asp-21 together coordinate Mg(2+). Residue Asp-21 is the Proton donor/acceptor of the active site. Alpha-D-mannose 1-phosphate is bound by residues Arg-28, Arg-133, Arg-144, Arg-151, Ser-189, and Asp-191. Mg(2+)-binding residues include Asp-219, Phe-231, Asp-233, and Thr-236.

Belongs to the eukaryotic PMM family. In terms of assembly, homodimer.

The protein resides in the cytoplasm. The catalysed reaction is alpha-D-mannose 1-phosphate = D-mannose 6-phosphate. It participates in nucleotide-sugar biosynthesis; GDP-alpha-D-mannose biosynthesis; alpha-D-mannose 1-phosphate from D-fructose 6-phosphate: step 2/2. In terms of biological role, involved in the synthesis of the GDP-mannose and dolichol-phosphate-mannose required for a number of critical mannosyl transfer reactions. This is Phosphomannomutase (pmm1) from Schizosaccharomyces pombe (strain 972 / ATCC 24843) (Fission yeast).